The chain runs to 243 residues: 7-carboxy-7-deazaguanine synthase (243 aa).

Substrate-binding positions include 15-17 (IQG) and Arg30. Residues 21-239 (VIGQKTMFVR…PQLHTLLWGN (219 aa)) form the Radical SAM core domain. The [4Fe-4S] cluster site is built by Cys34, Cys38, and Cys41. Ser43 serves as a coordination point for Mg(2+). Residue Ser81 participates in substrate binding. S-adenosyl-L-methionine contacts are provided by residues Gly83 and 127–129 (SPK).

Belongs to the radical SAM superfamily. 7-carboxy-7-deazaguanine synthase family. In terms of assembly, homodimer. Requires [4Fe-4S] cluster as cofactor. S-adenosyl-L-methionine serves as cofactor. It depends on Mg(2+) as a cofactor.

It catalyses the reaction 6-carboxy-5,6,7,8-tetrahydropterin + H(+) = 7-carboxy-7-deazaguanine + NH4(+). It participates in purine metabolism; 7-cyano-7-deazaguanine biosynthesis. In terms of biological role, catalyzes the complex heterocyclic radical-mediated conversion of 6-carboxy-5,6,7,8-tetrahydropterin (CPH4) to 7-carboxy-7-deazaguanine (CDG), a step common to the biosynthetic pathways of all 7-deazapurine-containing compounds. The protein is 7-carboxy-7-deazaguanine synthase of Bacillus subtilis (strain 168).